A 566-amino-acid chain; its full sequence is Chaperone ric-8 (566 aa).

The protein belongs to the synembryn family. As to quaternary structure, interacts with GDP-bound G-alpha proteins goa-1 and gpa-16. Does not interact with G-alpha proteins when they are in complex with subunits beta and gamma. As to expression, present throughout the nervous system in juveniles and adults (at protein level).

It localises to the cytoplasm. Its subcellular location is the cell cortex. In terms of biological role, chaperone that specifically binds and folds some, but not all, nascent G alpha proteins prior to G protein heterotrimer formation, promoting their stability and activity. Also acts as a guanine nucleotide exchange factor (GEF) for G alpha proteins by stimulating exchange of bound GDP for free GTP. Able to facilitate synaptic transmission in the nervous system probably by activating G(q)-alpha (egl-30). Also able to activate the G(s)-alpha in synaptic signaling network. Plays a key role in asymmetric spindle positioning, a step for asymmetric cell division that generates cell diversity during development by activating G(i)-alpha protein goa-1 and gpa-16 independently of G-protein coupled receptors. While it acts as a GEF for goa-1, it has no GEF activity toward gpa-16. In addition to its GEF activity, it is required for cortical subcellular localization of G-alpha proteins such as gpa-16. Also required for the interaction of goa-1 and gpr-1/2, suggesting that it may act by generating G-alpha proteins free from G-beta-gamma subunits, enabling gpr-1/2 to mediate asymmetric cell division. The polypeptide is Chaperone ric-8 (ric-8) (Caenorhabditis elegans).